Reading from the N-terminus, the 271-residue chain is Neurexophilin-1 (271 aa).

Positions 1-21 are cleaved as a signal peptide; the sequence is MQAACWYVLLLLQPTIYLVTC. Positions 22 to 97 are II; it reads ANLTNGGKSE…WDWLRNSTDL (76 aa). N-linked (GlcNAc...) asparagine glycans are attached at residues N23, N68, N93, N146, N156, and N162. An III region spans residues 98-176; that stretch reads QEPRPRAKRR…LVPPTKIVEF (79 aa). An IV (linker domain) region spans residues 177-185; sequence DLAQQTVID. The segment at 186-271 is v (Cys-rich); sequence AKDSKSFNCR…HSDTPYFPSG (86 aa).

This sequence belongs to the neurexophilin family.

It is found in the secreted. Functionally, may be signaling molecules that resemble neuropeptides and that act by binding to alpha-neurexins and possibly other receptors. This chain is Neurexophilin-1 (NXPH1), found in Pongo abelii (Sumatran orangutan).